Reading from the N-terminus, the 177-residue chain is SKP1-like protein 15 (177 aa).

The interval 108-167 (ILAANYLNVEGLLGLTCQTVADYIKDKTPEEVRELFNIENDFTHEEEEEAIRKENAWAFE) is interaction with the F-box domain of F-box proteins.

Belongs to the SKP1 family. As to quaternary structure, part of a SCF (SKP1-cullin-F-box) protein ligase complex. In terms of tissue distribution, expressed at low levels in seedlings and leaves.

Its subcellular location is the nucleus. Its pathway is protein modification; protein ubiquitination. In terms of biological role, involved in ubiquitination and subsequent proteasomal degradation of target proteins. Together with CUL1, RBX1 and a F-box protein, it forms a SCF E3 ubiquitin ligase complex. The functional specificity of this complex depends on the type of F-box protein. In the SCF complex, it serves as an adapter that links the F-box protein to CUL1. The protein is SKP1-like protein 15 (ASK15) of Arabidopsis thaliana (Mouse-ear cress).